The sequence spans 739 residues: Catalase-peroxidase (739 aa).

The first 23 residues, 1 to 23 (MLKKIVTALGMSGMLLASNSAIA), serve as a signal peptide directing secretion. The segment at residues 100 to 221 (WHDAGTYRIY…YAATQMGLIY (122 aa)) is a cross-link (tryptophyl-tyrosyl-methioninium (Trp-Tyr) (with M-247)). Histidine 101 serves as the catalytic Proton acceptor. A cross-link (tryptophyl-tyrosyl-methioninium (Tyr-Met) (with W-100)) is located at residues 221–247 (YVNPEGPDGKPDIKGAASEIRQAFRAM). Histidine 262 is a binding site for heme b.

Belongs to the peroxidase family. Peroxidase/catalase subfamily. In terms of assembly, homodimer or homotetramer. Heme b serves as cofactor. In terms of processing, formation of the three residue Trp-Tyr-Met cross-link is important for the catalase, but not the peroxidase activity of the enzyme.

It carries out the reaction H2O2 + AH2 = A + 2 H2O. The enzyme catalyses 2 H2O2 = O2 + 2 H2O. Its function is as follows. Bifunctional enzyme with both catalase and broad-spectrum peroxidase activity. In Francisella tularensis subsp. novicida (strain U112), this protein is Catalase-peroxidase.